We begin with the raw amino-acid sequence, 132 residues long: Flagellar basal body rod protein FlgB (132 aa).

The protein belongs to the flagella basal body rod proteins family. The basal body constitutes a major portion of the flagellar organelle and consists of a number of rings mounted on a central rod. In Gram-negative bacteria, at least four rings, L, P, S and M are present, whereas Gram-positive bacteria lack the L and P rings. The rod consists of about 26 subunits of FlgG in the distal portion, and FlgB, FlgC and FlgF build up the proximal portion of the rod with about 6 subunits each. Rod assembly occurs by export via the flagellum-specific pathway of its constituent proteins and by their incorporation into the rod structure in the probable order of FlgB, FlgC, FlgF and FlgG. Another protein, FliE, also assembles onto the stable rod structure.

It localises to the bacterial flagellum basal body. Structural component of flagellum, the bacterial motility apparatus. Part of the rod structure of flagellar basal body. The protein is Flagellar basal body rod protein FlgB of Aeromonas hydrophila.